Here is a 336-residue protein sequence, read N- to C-terminus: Dihydroorotate dehydrogenase (quinone) (336 aa).

Residues 62–66 and Thr-86 contribute to the FMN site; that span reads AGLDK. Residue Lys-66 coordinates substrate. Residue 111 to 115 coordinates substrate; it reads NRMGF. Residues Asn-139 and Asn-172 each contribute to the FMN site. Asn-172 is a binding site for substrate. Catalysis depends on Ser-175, which acts as the Nucleophile. A substrate-binding site is contributed by Asn-177. Residues Lys-217 and Thr-245 each coordinate FMN. Position 246-247 (246-247) interacts with substrate; the sequence is NT. Residues Gly-268, Gly-297, and 318–319 contribute to the FMN site; that span reads YS.

This sequence belongs to the dihydroorotate dehydrogenase family. Type 2 subfamily. In terms of assembly, monomer. FMN serves as cofactor.

The protein localises to the cell membrane. The catalysed reaction is (S)-dihydroorotate + a quinone = orotate + a quinol. It participates in pyrimidine metabolism; UMP biosynthesis via de novo pathway; orotate from (S)-dihydroorotate (quinone route): step 1/1. In terms of biological role, catalyzes the conversion of dihydroorotate to orotate with quinone as electron acceptor. In Aliivibrio fischeri (strain ATCC 700601 / ES114) (Vibrio fischeri), this protein is Dihydroorotate dehydrogenase (quinone).